Reading from the N-terminus, the 402-residue chain is Glutamate N-acetyltransferase (402 aa).

Substrate contacts are provided by Thr151, Lys178, Thr189, Glu267, Asn397, and Thr402. Thr189 serves as the catalytic Nucleophile.

It belongs to the ArgJ family. As to quaternary structure, heterotetramer of two alpha and two beta chains.

The protein resides in the cytoplasm. The enzyme catalyses N(2)-acetyl-L-ornithine + L-glutamate = N-acetyl-L-glutamate + L-ornithine. It functions in the pathway amino-acid biosynthesis; L-arginine biosynthesis; L-ornithine and N-acetyl-L-glutamate from L-glutamate and N(2)-acetyl-L-ornithine (cyclic): step 1/1. Its function is as follows. Catalyzes the transfer of the acetyl group from N(2)-acetylornithine to glutamate, forming N-acetylglutamate and L-ornithine. The sequence is that of Glutamate N-acetyltransferase from Methanothermobacter thermautotrophicus (strain ATCC 29096 / DSM 1053 / JCM 10044 / NBRC 100330 / Delta H) (Methanobacterium thermoautotrophicum).